The chain runs to 316 residues: Ribosomal protein L11 methyltransferase (316 aa).

S-adenosyl-L-methionine is bound by residues Thr157, Gly178, Asp200, and Asn243.

The protein belongs to the methyltransferase superfamily. PrmA family.

The protein localises to the cytoplasm. It catalyses the reaction L-lysyl-[protein] + 3 S-adenosyl-L-methionine = N(6),N(6),N(6)-trimethyl-L-lysyl-[protein] + 3 S-adenosyl-L-homocysteine + 3 H(+). Functionally, methylates ribosomal protein L11. The chain is Ribosomal protein L11 methyltransferase from Streptococcus pneumoniae (strain Hungary19A-6).